The sequence spans 70 residues: ATP synthase subunit c (70 aa).

2 helical membrane passes run 4–24 and 47–67; these read IAAG…NGLV and FIGV…ALMV.

It belongs to the ATPase C chain family. F-type ATPases have 2 components, F(1) - the catalytic core - and F(0) - the membrane proton channel. F(1) has five subunits: alpha(3), beta(3), gamma(1), delta(1), epsilon(1). F(0) has three main subunits: a(1), b(2) and c(10-14). The alpha and beta chains form an alternating ring which encloses part of the gamma chain. F(1) is attached to F(0) by a central stalk formed by the gamma and epsilon chains, while a peripheral stalk is formed by the delta and b chains.

It is found in the cell membrane. Functionally, f(1)F(0) ATP synthase produces ATP from ADP in the presence of a proton or sodium gradient. F-type ATPases consist of two structural domains, F(1) containing the extramembraneous catalytic core and F(0) containing the membrane proton channel, linked together by a central stalk and a peripheral stalk. During catalysis, ATP synthesis in the catalytic domain of F(1) is coupled via a rotary mechanism of the central stalk subunits to proton translocation. Key component of the F(0) channel; it plays a direct role in translocation across the membrane. A homomeric c-ring of between 10-14 subunits forms the central stalk rotor element with the F(1) delta and epsilon subunits. The sequence is that of ATP synthase subunit c from Lactiplantibacillus plantarum (strain ATCC BAA-793 / NCIMB 8826 / WCFS1) (Lactobacillus plantarum).